The sequence spans 210 residues: Thiamine-phosphate synthase (210 aa).

4-amino-2-methyl-5-(diphosphooxymethyl)pyrimidine is bound by residues 38 to 42 (QFREK) and N70. The Mg(2+) site is built by D71 and D90. S107 lines the 4-amino-2-methyl-5-(diphosphooxymethyl)pyrimidine pocket. 132-134 (TKT) contributes to the 2-[(2R,5Z)-2-carboxy-4-methylthiazol-5(2H)-ylidene]ethyl phosphate binding site. K135 provides a ligand contact to 4-amino-2-methyl-5-(diphosphooxymethyl)pyrimidine. 183–184 (IS) provides a ligand contact to 2-[(2R,5Z)-2-carboxy-4-methylthiazol-5(2H)-ylidene]ethyl phosphate.

The protein belongs to the thiamine-phosphate synthase family. The cofactor is Mg(2+).

It catalyses the reaction 2-[(2R,5Z)-2-carboxy-4-methylthiazol-5(2H)-ylidene]ethyl phosphate + 4-amino-2-methyl-5-(diphosphooxymethyl)pyrimidine + 2 H(+) = thiamine phosphate + CO2 + diphosphate. The catalysed reaction is 2-(2-carboxy-4-methylthiazol-5-yl)ethyl phosphate + 4-amino-2-methyl-5-(diphosphooxymethyl)pyrimidine + 2 H(+) = thiamine phosphate + CO2 + diphosphate. The enzyme catalyses 4-methyl-5-(2-phosphooxyethyl)-thiazole + 4-amino-2-methyl-5-(diphosphooxymethyl)pyrimidine + H(+) = thiamine phosphate + diphosphate. It participates in cofactor biosynthesis; thiamine diphosphate biosynthesis; thiamine phosphate from 4-amino-2-methyl-5-diphosphomethylpyrimidine and 4-methyl-5-(2-phosphoethyl)-thiazole: step 1/1. Functionally, condenses 4-methyl-5-(beta-hydroxyethyl)thiazole monophosphate (THZ-P) and 2-methyl-4-amino-5-hydroxymethyl pyrimidine pyrophosphate (HMP-PP) to form thiamine monophosphate (TMP). The protein is Thiamine-phosphate synthase of Archaeoglobus fulgidus (strain ATCC 49558 / DSM 4304 / JCM 9628 / NBRC 100126 / VC-16).